A 155-amino-acid chain; its full sequence is RING finger protein 122 (155 aa).

The chain crosses the membrane as a helical span at residues 40 to 60 (VIFGTGIFVFMLSLIFCCYFI). An RING-type; atypical zinc finger spans residues 93-134 (CAVCLEDFKGKDELGVLPCQHAFHRKCLVKWLEVRCVCPMCN).

The protein localises to the golgi apparatus. It localises to the endoplasmic reticulum. Its subcellular location is the membrane. May induce necrosis and apoptosis. May play a role in cell viability. The chain is RING finger protein 122 (Rnf122) from Mus musculus (Mouse).